Here is a 277-residue protein sequence, read N- to C-terminus: Collectin-10 (277 aa).

The N-terminal stretch at Met1–Gly27 is a signal peptide. The segment at Ala40–Gly107 is disordered. Residues Lys49–His64 show a composition bias toward basic and acidic residues. Positions Gly53 to Lys112 constitute a Collagen-like domain. Residues Thr155–Glu271 enclose the C-type lectin domain. Intrachain disulfides connect Cys176–Cys270 and Cys248–Cys262. An N-linked (GlcNAc...) asparagine glycan is attached at Asn258.

Belongs to the COLEC10/COLEC11 family. In terms of tissue distribution, highly expressed in liver, placenta and adrenal gland. Moderately expressed in small intestine, lung, stomach and prostate. Weakly expressed in trachea and spleen.

The protein localises to the secreted. Its subcellular location is the golgi apparatus. It localises to the cytoplasm. Its function is as follows. Lectin that binds to various sugars: galactose &gt; mannose = fucose &gt; N-acetylglucosamine &gt; N-acetylgalactosamine. Acts as a chemoattractant, probably involved in the regulation of cell migration. This Homo sapiens (Human) protein is Collectin-10 (COLEC10).